A 155-amino-acid chain; its full sequence is MDVGLTVLDHRLLSEEPWPNGSLAVMELPLSADQRTVLRGRRRTACGRDVLLQLPRERALMPGDRLTDAHEQVHVLVTAALEELLRVEAATPLALLEAAYHLGNRHVALELHEDELLLLNDSVLETMLKGRGLKLTRCCRSFMPEGGAYIAHQHA.

It belongs to the UreE family.

The protein resides in the cytoplasm. Involved in urease metallocenter assembly. Binds nickel. Probably functions as a nickel donor during metallocenter assembly. The sequence is that of Urease accessory protein UreE from Synechococcus sp. (strain CC9311).